Reading from the N-terminus, the 291-residue chain is POU class 2 homeobox associating-factor 2 (291 aa).

One can recognise an OCA domain in the interval 7–29; that stretch reads KRVYQGVRVKHTVKDLLAEKRLR. The interval 176 to 219 is disordered; that stretch reads AAPVADSPSLAGPDSGSSSPYRLTSGRSGSSIPSSSQPYTLQPL. Residues 200–211 show a composition bias toward low complexity; it reads SGRSGSSIPSSS.

Belongs to the POU2AF family.

In terms of biological role, transcriptional coactivator that may regulate cell type-specific differentiation pathways. The protein is POU class 2 homeobox associating-factor 2 (pou2af2) of Danio rerio (Zebrafish).